Consider the following 718-residue polypeptide: Protein Hook homolog 3 (718 aa).

The residue at position 1 (Met1) is an N-acetylmethionine. Positions 1–164 (MFNVESVERV…QELMSKESPV (164 aa)) are sufficient for interaction with microtubules. The residue at position 6 (Ser6) is a Phosphoserine. One can recognise a Calponin-homology (CH) domain in the interval 10–126 (VELCESLLTW…RMLQLILGCA (117 aa)). Coiled-coil stretches lie at residues 168–433 (HDAY…VQAQ) and 462–663 (EIRE…MEEK). Ser238 carries the post-translational modification Phosphoserine. The segment at 450–671 (SSDSLAAEIV…EKYIVSAWYN (222 aa)) is sufficient for interaction with IIGP1. The segment at 553–718 (EKLHEANNEL…PGHVQPATAR (166 aa)) is required for association with Golgi. The interval 682–718 (EDRLASTGSGQSFLARQRQATSTRRSYPGHVQPATAR) is disordered. Residues 687–706 (STGSGQSFLARQRQATSTRR) show a composition bias toward polar residues. Phosphoserine occurs at positions 693 and 707.

The protein belongs to the hook family. Self-associates. Component of the FTS/Hook/FHIP complex (FHF complex), composed of AKTIP/FTS, FHIP1B, and one or more members of the Hook family of proteins HOOK1, HOOK2, and HOOK3. May interact directly with AKTIP/FTS, HOOK1 and HOOK2. Associates with several subunits of the homotypic vesicular sorting complex (the HOPS complex) including VPS16 and VPS41; these interactions may be indirect. Interacts with IIGP1. Interacts with MSR1, and this association is stimulated by ligand binding to MSR1. Interacts with microtubules. Part of a tripartite complex with dynein and dynactin, acts an adapter linking the dynein motor complex and dynactin. Interacts with dynein intermediate chain and dynactin (DCTN1). Interacts with CCDC181. Interacts with LRGUK. As to quaternary structure, (Microbial infection) Interacts with Salmonella typhimurium spiC. In terms of tissue distribution, expressed in brain, cerebellum, heart, intestine, kidney, liver, lung, skeletal muscle, spleen and stomach (at protein level).

It is found in the cytoplasm. The protein localises to the cytoskeleton. It localises to the golgi apparatus. Its function is as follows. Acts as an adapter protein linking the dynein motor complex to various cargos and converts dynein from a non-processive to a highly processive motor in the presence of dynactin. Facilitates the interaction between dynein and dynactin and activates dynein processivity (the ability to move along a microtubule for a long distance without falling off the track). Predominantly recruits 2 dyneins, which increases both the force and speed of the microtubule motor. Component of the FTS/Hook/FHIP complex (FHF complex). The FHF complex may function to promote vesicle trafficking and/or fusion via the homotypic vesicular protein sorting complex (the HOPS complex). May regulate clearance of endocytosed receptors such as MSR1. Participates in defining the architecture and localization of the Golgi complex. FHF complex promotes the distribution of AP-4 complex to the perinuclear area of the cell. (Microbial infection) Serves as a target for the spiC protein from Salmonella typhimurium, which inactivates it, leading to a strong alteration in cellular trafficking. This is Protein Hook homolog 3 (Hook3) from Mus musculus (Mouse).